Here is a 504-residue protein sequence, read N- to C-terminus: MEKFQGYLEFDGARQQSFLYPLFFREYIYVLAYDHGLNRLNRNRSIFLENADYDKKYSSLIVKRSILRMYEQNRLIIPTKDLNQNPFFGHTNIFYYQIISVLFAVIVEIPFSLRLGSYFEGKKFKKSYNLQSIHSIFPFLEDKLSHFNYVLDVLIPYPIHLEILVQILRYWVKDASSLHFFRFCLYEYCNWKNFDIKKKCILNPRFFLFLYNSHVCEYESIFFFLRKRSSHLRSTSYEVLFERILFYGKVQHFLKVFVNNFPAIPGLLTDPFLHYVRYHGKCILATKDTPLLMNKWKFFFVYLWQCYFSVWFQSQKVNINQLSKDNLEFLGYLSSLRLNPLVVRSQMLENSFIIDNVRIKLDSKIPISSIILSLAKDKFCNVLGHPISKATWTDSSDSDILNRFVRICRNISHYYSGSSKKKNLYRIKYILRLCCVKTLARKHKSTVRAFLKRLGSGLLEEFLTGEDQVLSLIFPRSYYASKRLYRVRIWYLDILYLNDLVNHE.

The protein belongs to the intron maturase 2 family. MatK subfamily.

It localises to the plastid. Its subcellular location is the chloroplast. In terms of biological role, usually encoded in the trnK tRNA gene intron. Probably assists in splicing its own and other chloroplast group II introns. This Pseudoturritis turrita (Tower rock-cress) protein is Maturase K.